A 717-amino-acid polypeptide reads, in one-letter code: Putative amino acid transporter AAT1 (717 aa).

A compositionally biased stretch (basic and acidic residues) spans 1 to 10 (MREGAFDASR). A disordered region spans residues 1-88 (MREGAFDASR…DRAQTDSRQE (88 aa)). Positions 16–25 (QRPSSLSTAQ) are enriched in polar residues. Over residues 26–53 (PPSDSRPPSSSSPPSSSSSSSSASSSSP) the composition is skewed to low complexity. Positions 74–88 (SAEKMDRAQTDSRQE) are enriched in basic and acidic residues. 8 helical membrane passes run 124–143 (VLTL…PYAM), 149–170 (LIGL…YILM), 196–216 (AVDA…LVFL), 236–253 (HRAA…PLSV), 265–283 (FFPV…YRSL), 303–320 (FKSF…INVC), 341–358 (AALL…LGYL), and 378–402 (LMHV…IPTV). Residues 462–602 (GDAEYGGAEA…REEREEREGQ (141 aa)) form a disordered region. Over residues 463–477 (DAEYGGAEAGEATRG) the composition is skewed to low complexity. Residues 497-519 (ARNRDRSRLHADSERSAGDREGS) show a composition bias toward basic and acidic residues. Over residues 547 to 558 (GSSSASSRSVDS) the composition is skewed to low complexity. Residues 584–602 (SGDREAREEREEREEREGQ) are compositionally biased toward basic and acidic residues. Transmembrane regions (helical) follow at residues 622-638 (VCVA…ALVL), 644-669 (VVGL…YAGI), and 681-702 (LLMV…IIIL).

It belongs to the amino acid/polyamine transporter 2 family.

It is found in the vacuole membrane. Its function is as follows. Putative amino acid transporter. Probably transports arginine. Involved in maintaining the osmotic homeostasis of the digestive vacuole. Required for extracellular parasite survival and bradyzoite differentiation. This is Putative amino acid transporter AAT1 from Toxoplasma gondii (strain ATCC 50611 / Me49).